A 141-amino-acid chain; its full sequence is Large ribosomal subunit protein uL16 (141 aa).

Belongs to the universal ribosomal protein uL16 family. Part of the 50S ribosomal subunit.

Binds 23S rRNA and is also seen to make contacts with the A and possibly P site tRNAs. The polypeptide is Large ribosomal subunit protein uL16 (Aliarcobacter butzleri (strain RM4018) (Arcobacter butzleri)).